The following is a 547-amino-acid chain: Chaperonin GroEL (547 aa).

ATP is bound by residues 30–33 (TLGP), Lys51, 87–91 (DGTTT), Gly415, and Asp495.

Belongs to the chaperonin (HSP60) family. As to quaternary structure, forms a cylinder of 14 subunits composed of two heptameric rings stacked back-to-back. Interacts with the co-chaperonin GroES.

It is found in the cytoplasm. The enzyme catalyses ATP + H2O + a folded polypeptide = ADP + phosphate + an unfolded polypeptide.. Functionally, together with its co-chaperonin GroES, plays an essential role in assisting protein folding. The GroEL-GroES system forms a nano-cage that allows encapsulation of the non-native substrate proteins and provides a physical environment optimized to promote and accelerate protein folding. This chain is Chaperonin GroEL, found in Bartonella quintana (strain Toulouse) (Rochalimaea quintana).